The sequence spans 37 residues: Large ribosomal subunit protein bL36 (37 aa).

The protein belongs to the bacterial ribosomal protein bL36 family.

The chain is Large ribosomal subunit protein bL36 from Desulfitobacterium hafniense (strain Y51).